The primary structure comprises 449 residues: Maltoporin (449 aa).

The N-terminal stretch at 1–24 (MITLRKLPLAVAVAAGVMSAQAMA) is a signal peptide.

Belongs to the porin LamB (TC 1.B.3) family. In terms of assembly, homotrimer formed of three 18-stranded antiparallel beta-barrels, containing three independent channels.

It localises to the cell outer membrane. The enzyme catalyses beta-maltose(in) = beta-maltose(out). In terms of biological role, involved in the transport of maltose and maltodextrins. The sequence is that of Maltoporin from Citrobacter koseri (strain ATCC BAA-895 / CDC 4225-83 / SGSC4696).